Reading from the N-terminus, the 518-residue chain is AarF domain-containing kinase 1 (518 aa).

One can recognise a Protein kinase domain in the interval 149-468 (SFEREPLGTA…SKCCVQSSYA (320 aa)). ATP-binding positions include 155–163 (LGTASLAQV) and K177. The active-site Proton acceptor is D309.

It belongs to the protein kinase superfamily. ADCK protein kinase family.

It localises to the mitochondrion. Essential for maintaining mitochondrial cristae formation and mitochondrial function by acting via YME1L to regulate the mitochondrial structural proteins Opa1 and Mitofilin. This function is likely to be kinase-independent. Functions in tracheal development and larval molting probably by acting in sterol modification and/or intracellular lipid trafficking. The action of this enzyme is not yet clear. It is not known if it has protein kinase activity and what type of substrate it would phosphorylate (Ser, Thr or Tyr). This is AarF domain-containing kinase 1 from Drosophila melanogaster (Fruit fly).